The primary structure comprises 1505 residues: Anaphase-promoting complex subunit 1 (1505 aa).

Belongs to the APC1 family. The APC/C complex is probably composed of at least 12 subunits: apc-2, apc-10, apc-11, cdc-26, emb-1, emb-27, emb-30, mat-1, mat-2, mat-3, such-1 and gfi-3.

It functions in the pathway protein modification; protein ubiquitination. In terms of biological role, probable component of the anaphase promoting complex/cyclosome (APC/C), a cell cycle-regulated E3 ubiquitin ligase that controls progression through mitosis and the G1 phase of the cell cycle. The APC/C complex acts by mediating ubiquitination and subsequent degradation of target proteins. Developmental role in early embryogenesis and the metaphase to anaphase transition in oocyte and spermatocyte meiosis and mitosis in germ cells. Required for embryonic anterior-posterior axis formation. Plays a role in regulating the abundance of glr-1 receptors in postmitotic neurons, which may in turn control animal locomotion. Involved in regulating GABA neurotransmitter release at neuromuscular junctions in GABA motor neurons. This Caenorhabditis elegans protein is Anaphase-promoting complex subunit 1.